We begin with the raw amino-acid sequence, 244 residues long: DnaJ homolog subfamily C member 4 (244 aa).

The 66-residue stretch at Asn37–Leu102 folds into the J domain. A disordered region spans residues Arg96–Trp127. Positions His103–Trp127 are enriched in polar residues. Residues Val159 to Phe178 form a helical membrane-spanning segment. The tract at residues Arg208–Pro244 is disordered.

It is found in the membrane. This is DnaJ homolog subfamily C member 4 (Dnajc4) from Mus musculus (Mouse).